Here is a 1391-residue protein sequence, read N- to C-terminus: DNA-directed RNA polymerase subunit beta' (1391 aa).

Residues Cys-72, Cys-74, Cys-87, and Cys-90 each contribute to the Zn(2+) site. Positions 462, 464, and 466 each coordinate Mg(2+). Residues Cys-816, Cys-890, Cys-897, and Cys-900 each coordinate Zn(2+).

Belongs to the RNA polymerase beta' chain family. In terms of assembly, the RNAP catalytic core consists of 2 alpha, 1 beta, 1 beta' and 1 omega subunit. When a sigma factor is associated with the core the holoenzyme is formed, which can initiate transcription. Mg(2+) is required as a cofactor. It depends on Zn(2+) as a cofactor.

It carries out the reaction RNA(n) + a ribonucleoside 5'-triphosphate = RNA(n+1) + diphosphate. DNA-dependent RNA polymerase catalyzes the transcription of DNA into RNA using the four ribonucleoside triphosphates as substrates. The sequence is that of DNA-directed RNA polymerase subunit beta' from Neisseria meningitidis serogroup C / serotype 2a (strain ATCC 700532 / DSM 15464 / FAM18).